A 150-amino-acid polypeptide reads, in one-letter code: UPF0756 membrane protein Dd703_1075 (150 aa).

The next 4 helical transmembrane spans lie at 8–28 (LLIL…TITL), 51–71 (YGLS…IASG), 81–101 (AFLN…SWLG), and 114–134 (VVAG…GVPV).

The protein belongs to the UPF0756 family.

The protein localises to the cell membrane. The polypeptide is UPF0756 membrane protein Dd703_1075 (Musicola paradisiaca (strain Ech703) (Dickeya paradisiaca)).